Reading from the N-terminus, the 74-residue chain is RNA-binding protein Hfq (74 aa).

Residues 9–69 (DQFLNQLRKD…ISTFAPEKNV (61 aa)) enclose the Sm domain.

The protein belongs to the Hfq family. In terms of assembly, homohexamer.

Its function is as follows. RNA chaperone that binds small regulatory RNA (sRNAs) and mRNAs to facilitate mRNA translational regulation in response to envelope stress, environmental stress and changes in metabolite concentrations. Also binds with high specificity to tRNAs. This is RNA-binding protein Hfq from Geobacillus sp. (strain WCH70).